Reading from the N-terminus, the 344-residue chain is Meiotic recombination protein DMC1 homolog A (344 aa).

Glycine 133 to threonine 140 serves as a coordination point for ATP. Arginine 235 serves as a coordination point for dsDNA. SsDNA-binding residues include arginine 235, phenylalanine 238, arginine 241, arginine 247, and arginine 315. The dsDNA site is built by arginine 241 and arginine 247.

It belongs to the RecA family. DMC1 subfamily. Expressed in meiotic young panicles.

It is found in the nucleus. In terms of biological role, recombinase that may participate in meiotic recombination, specifically in homologous strand assimilation, which is required for the resolution of meiotic double-strand breaks. Exhibits DNA-dependent ATPase activity when bound to single-stranded DNA (ssDNA). Mediates renaturation of homologous complementary strands as well as assimilation of single strands into homologous supercoiled duplexes leading to D-loop formation. Binds circular single-stranded DNA (ssDNA) and circular double-stranded DNA (dsDNA) in vitro. Catalyzes DNA homologous renaturation and DNA strand exchange. The rates of these activities are dependent on the state of ATP hydrolysis. Forms helical filaments along ssDNA and dsDNA, and promotes strand exchange between ssDNA and dsDNA with long DNA substrates of several thousand base pairs. The presence of the replication protein A is not required for this activity. Seems to be required for homologous pairing and subsequent chromosome segregation during male meiosis. May be not directly required for homologous pairing during male meiosis. Required for synaptonemal complex assembly and crossover formation. Functions redundantly with DMC1B. The protein is Meiotic recombination protein DMC1 homolog A of Oryza sativa subsp. japonica (Rice).